A 641-amino-acid chain; its full sequence is Threonine--tRNA ligase (641 aa).

Positions methionine 1–threonine 61 constitute a TGS domain. Residues aspartate 242 to proline 533 are catalytic. Zn(2+) contacts are provided by cysteine 333, histidine 384, and histidine 510.

This sequence belongs to the class-II aminoacyl-tRNA synthetase family. Homodimer. Zn(2+) is required as a cofactor.

The protein localises to the cytoplasm. It catalyses the reaction tRNA(Thr) + L-threonine + ATP = L-threonyl-tRNA(Thr) + AMP + diphosphate + H(+). Its function is as follows. Catalyzes the attachment of threonine to tRNA(Thr) in a two-step reaction: L-threonine is first activated by ATP to form Thr-AMP and then transferred to the acceptor end of tRNA(Thr). Also edits incorrectly charged L-seryl-tRNA(Thr). This Marinobacter nauticus (strain ATCC 700491 / DSM 11845 / VT8) (Marinobacter aquaeolei) protein is Threonine--tRNA ligase.